A 345-amino-acid chain; its full sequence is Protein D345L (345 aa).

The protein belongs to the asfivirus D345L family. In terms of assembly, interacts with IKKA/CHUK and IKBKB.

Its subcellular location is the host cytoplasm. Its function is as follows. Plays a role in the negative regulation of host NF-kappa-B signaling pathway. Mechanistically, recruits host IKKA/CHUK and IKBKB to suppress their kinase activity towards NFKBIA. In African swine fever virus (strain Badajoz 1971 Vero-adapted) (Ba71V), this protein is Protein D345L.